A 430-amino-acid chain; its full sequence is Maintenance of mitochondrial morphology protein 1 (430 aa).

Residues 1-82 (MTEIDPNINE…ISNTWNFTQG (82 aa)) are Lumenal-facing. The chain crosses the membrane as a helical span at residues 83-103 (LVVGQLSVIFLIIIFVKFFVF). At 104–430 (ADSSSSIPSK…AKPKDSDDTL (327 aa)) the chain is on the cytoplasmic side. Basic and acidic residues-rich tracts occupy residues 126–138 (RDNKSTTSRDRHN) and 335–346 (ENGKGSSSEDKK). Disordered stretches follow at residues 126–154 (RDNKSTTSRDRHNGIGGKDSNLEPSTDDE) and 315–346 (QADQVARPSNGHTSTDNGNDENGKGSSSEDKK). In terms of domain architecture, SMP-LTD spans 178-408 (ASESLDWFNV…EPRFQVVKLP (231 aa)).

This sequence belongs to the MMM1 family. In terms of assembly, homodimer. Component of the ER-mitochondria encounter structure (ERMES) or MDM complex, composed of MMM1, MDM10, MDM12 and MDM34. An MMM1 homodimer associates with one molecule of MDM12 on each side in a pairwise head-to-tail manner, and the SMP-LTD domains of MMM1 and MDM12 generate a continuous hydrophobic tunnel for phospholipid trafficking.

The protein localises to the endoplasmic reticulum membrane. Functionally, component of the ERMES/MDM complex, which serves as a molecular tether to connect the endoplasmic reticulum (ER) and mitochondria. Components of this complex are involved in the control of mitochondrial shape and protein biogenesis, and function in nonvesicular lipid trafficking between the ER and mitochondria. The MDM12-MMM1 subcomplex functions in the major beta-barrel assembly pathway that is responsible for biogenesis of all outer membrane beta-barrel proteins, and acts in a late step after the SAM complex. The MDM10-MDM12-MMM1 subcomplex further acts in the TOM40-specific pathway after the action of the MDM12-MMM1 complex. Essential for establishing and maintaining the structure of mitochondria and maintenance of mtDNA nucleoids. The protein is Maintenance of mitochondrial morphology protein 1 of Lodderomyces elongisporus (strain ATCC 11503 / CBS 2605 / JCM 1781 / NBRC 1676 / NRRL YB-4239) (Yeast).